A 645-amino-acid chain; its full sequence is 1,4-alpha-glucan branching enzyme GlgB (645 aa).

Residue Asp-309 is the Nucleophile of the active site. The Proton donor role is filled by Glu-352. The disordered stretch occupies residues 619–645 (VKTRKGSKKQDGSKTKVRSNVTSRGKR). Polar residues predominate over residues 636–645 (RSNVTSRGKR).

This sequence belongs to the glycosyl hydrolase 13 family. GlgB subfamily. As to quaternary structure, monomer.

It carries out the reaction Transfers a segment of a (1-&gt;4)-alpha-D-glucan chain to a primary hydroxy group in a similar glucan chain.. It functions in the pathway glycan biosynthesis; glycogen biosynthesis. Functionally, catalyzes the formation of the alpha-1,6-glucosidic linkages in glycogen by scission of a 1,4-alpha-linked oligosaccharide from growing alpha-1,4-glucan chains and the subsequent attachment of the oligosaccharide to the alpha-1,6 position. The protein is 1,4-alpha-glucan branching enzyme GlgB of Bacillus anthracis (strain CDC 684 / NRRL 3495).